The sequence spans 99 residues: DNA-binding protein HU (99 aa).

Residues 67–86 (REGRNPKTGAKMKIDAYNQP) form a disordered region.

This sequence belongs to the bacterial histone-like protein family. Homodimer.

In terms of biological role, histone-like DNA-binding protein which is capable of wrapping DNA to stabilize it, and thus to prevent its denaturation under extreme environmental conditions. The polypeptide is DNA-binding protein HU (hup) (Rickettsia felis (strain ATCC VR-1525 / URRWXCal2) (Rickettsia azadi)).